The chain runs to 381 residues: O-antigen chain mannosyltransferase B (381 aa).

Belongs to the glycosyltransferase group 1 family. Glycosyltransferase 4 subfamily.

The enzyme catalyses alpha-D-mannosyl-(1-&gt;3)-N-acetyl-alpha-D-glucosaminyl-di-trans,octa-cis-undecaprenyl diphosphate + 2 GDP-alpha-D-mannose = alpha-D-mannosyl-(1-&gt;3)-alpha-D-mannosyl-(1-&gt;3)-alpha-D-mannosyl-(1-&gt;3)-N-acetyl-alpha-D-glucosaminyl-di-trans,octa-cis-undecaprenyl diphosphate + 2 GDP + 2 H(+). Its pathway is bacterial outer membrane biogenesis; LPS O-antigen biosynthesis. Its function is as follows. Mannosyltransferase involved in the biosynthesis of the repeat unit of the lipopolysaccharide (LPS) O-antigen region. Catalyzes the transfer of two alpha-(1-&gt;3)-linked mannose residues to the product of the WbdC enzyme during the synthesis of the adapter region. The chain is O-antigen chain mannosyltransferase B from Escherichia coli.